A 161-amino-acid polypeptide reads, in one-letter code: Putative pre-16S rRNA nuclease (161 aa).

It belongs to the YqgF nuclease family.

The protein localises to the cytoplasm. Could be a nuclease involved in processing of the 5'-end of pre-16S rRNA. The protein is Putative pre-16S rRNA nuclease of Prochlorococcus marinus (strain MIT 9313).